We begin with the raw amino-acid sequence, 348 residues long: Nicotinate-nucleotide--dimethylbenzimidazole phosphoribosyltransferase (348 aa).

E316 serves as the catalytic Proton acceptor.

The protein belongs to the CobT family.

It carries out the reaction 5,6-dimethylbenzimidazole + nicotinate beta-D-ribonucleotide = alpha-ribazole 5'-phosphate + nicotinate + H(+). It participates in nucleoside biosynthesis; alpha-ribazole biosynthesis; alpha-ribazole from 5,6-dimethylbenzimidazole: step 1/2. In terms of biological role, catalyzes the synthesis of alpha-ribazole-5'-phosphate from nicotinate mononucleotide (NAMN) and 5,6-dimethylbenzimidazole (DMB). This is Nicotinate-nucleotide--dimethylbenzimidazole phosphoribosyltransferase from Xanthomonas campestris pv. campestris (strain B100).